The following is a 326-amino-acid chain: Gamma-resorcylate decarboxylase (326 aa).

Mn(2+) is bound by residues Glu-8, His-10, His-164, and Asp-287. Asp-287 is a catalytic residue.

This sequence belongs to the metallo-dependent hydrolases superfamily. ACMSD family. Homotetramer. Mn(2+) is required as a cofactor.

The enzyme catalyses 2,6-dihydroxybenzoate + H(+) = resorcinol + CO2. The catalysed reaction is 2,3-dihydroxybenzoate + H(+) = catechol + CO2. It functions in the pathway aromatic compound metabolism. With respect to regulation, activity is inhibited by 2-nitroresorcinol (2-NR). Functionally, involved in the gamma-resorcylate (2,6-dihydroxybenzoate) catabolism. Catalyzes the reversible decarboxylation of gamma-resorcylate to resorcinol. Also catalyzes the decarboxylation of 2,3-dihydroxybenzoate to catechol, 2,4,6-trihydroxybenzoate to benzene-1,3,5-triol, and 2,6-dihydroxy-4-methylbenzoate to 5-methylbenzene-1,3-diol. This chain is Gamma-resorcylate decarboxylase, found in Polaromonas sp. (strain JS666 / ATCC BAA-500).